The primary structure comprises 335 residues: Probable BOI-related E3 ubiquitin-protein ligase 3 (335 aa).

Residues 196–232 (LEEKVKSLCVENQIWRDVAQSNEATVNALRSNLQQVL) form a WRD domain region. The RING-type zinc finger occupies 287–322 (CRSCGKGEASVLLLPCRHMCLCSVCGSSLNTCPICK).

Interacts with the DELLA proteins GAI, RGA, RGL1, RGL2 and RGL3.

It catalyses the reaction S-ubiquitinyl-[E2 ubiquitin-conjugating enzyme]-L-cysteine + [acceptor protein]-L-lysine = [E2 ubiquitin-conjugating enzyme]-L-cysteine + N(6)-ubiquitinyl-[acceptor protein]-L-lysine.. It functions in the pathway protein degradation; proteasomal ubiquitin-dependent pathway. Probable E3 ubiquitin-protein ligase. Has no effect on the stability of the DELLA proteins. The protein is Probable BOI-related E3 ubiquitin-protein ligase 3 (BRG3) of Arabidopsis thaliana (Mouse-ear cress).